The following is a 446-amino-acid chain: Glutamine synthetase (446 aa).

Positions 15-102 (RDIRFVRLWF…MFCDITMPDG (88 aa)) constitute a GS beta-grasp domain. One can recognise a GS catalytic domain in the interval 109–446 (SRHVLRRQLA…PYELKNYLSL (338 aa)). Residues glutamate 132 and glutamate 134 each contribute to the Mg(2+) site. Glutamate 184 contributes to the ATP binding site. 2 residues coordinate Mg(2+): glutamate 189 and glutamate 196. Residue glycine 241 coordinates L-glutamate. Histidine 245 is a binding site for Mg(2+). ATP is bound by residues 247-249 (HMS) and serine 249. Positions 298, 304, and 316 each coordinate L-glutamate. Residues arginine 316 and arginine 321 each coordinate ATP. Mg(2+) is bound at residue glutamate 336. L-glutamate is bound at residue arginine 338. Residue lysine 363 forms an Isoglutamyl lysine isopeptide (Lys-Gln) (interchain with Q-Cter in protein Pup) linkage.

It belongs to the glutamine synthetase family. As to quaternary structure, oligomer of 12 subunits arranged in the form of two hexagons. In its feedback-inhibited form, interacts with TnrA in order to block its DNA-binding activity. The cofactor is Mg(2+).

It localises to the cytoplasm. It carries out the reaction L-glutamate + NH4(+) + ATP = L-glutamine + ADP + phosphate + H(+). Inhibited by glutamine. Functionally, glutamine synthetase (GS) is an unusual multitasking protein that functions as an enzyme, a transcription coregulator, and a chaperone in ammonium assimilation and in the regulation of genes involved in nitrogen metabolism. It catalyzes the ATP-dependent biosynthesis of glutamine from glutamate and ammonia. Feedback-inhibited GlnA also interacts with and regulates the activity of the transcriptional regulator TnrA. During nitrogen limitation, TnrA is in its DNA-binding active state and turns on the transcription of genes required for nitrogen assimilation. Under conditions of nitrogen excess, feedback-inhibited GlnA forms a stable complex with TnrA, which inhibits its DNA-binding activity. In contrast, feedback-inhibited GlnA acts as a chaperone to stabilize the DNA-binding activity of GlnR, which represses the transcription of nitrogen assimilation genes. This chain is Glutamine synthetase, found in Mycolicibacterium smegmatis (strain ATCC 700084 / mc(2)155) (Mycobacterium smegmatis).